A 348-amino-acid polypeptide reads, in one-letter code: UPF0283 membrane protein PMI1371 (348 aa).

Helical transmembrane passes span 69-89 (LITVASTILGVSVIAQAGQWI) and 99-119 (IALGAASAGGLIVIAGMGSVI).

This sequence belongs to the UPF0283 family.

The protein resides in the cell inner membrane. The polypeptide is UPF0283 membrane protein PMI1371 (Proteus mirabilis (strain HI4320)).